Here is a 447-residue protein sequence, read N- to C-terminus: MTTAQFICLSLGSNLGNRFEIFRKAFALLKELEIEDLQSSIILETKALLLPGSPKEWDLPFFNSVLIGKTTLSPKQLLSGVKQIERRLGRDVNALPWSPRVLDIDILLYGDENHQQEDVKIPHERITERPFLLSLIASLCPTRIFHKPGSEYHLKSFGEIAHLLPCPQEMILNSFSPNTLLMGVVNVTDNSISDEGLYLEASKAVAHAEKLFAQGASVIDFGGQATNPKVQQLLNVEQEWSRLEPVLKLLAEKWAGRRQYPDISLDTFYPEIIKRALEIYPIRWINDVSGGSKEMAEIARDANLLLVINHSCSLPPRPDKTLAFTTCASDQLLSWGEKQIEAFVALGLRQDQIIFDPGIGFGTTQIQALNVLHKMKKFRKLGCATLVGHSRKSCFSLLGKYDAKDRDWETVSLSVLLQQQGVNYLRVHDVEANQRVLSAAAWSGVHV.

Residues 1–165 (MTTAQFICLS…SFGEIAHLLP (165 aa)) are HPPK. One can recognise a Pterin-binding domain in the interval 179-438 (TLLMGVVNVT…DVEANQRVLS (260 aa)). The tract at residues 181–447 (LMGVVNVTDN…SAAAWSGVHV (267 aa)) is DHPS. Position 186 (Asn-186) interacts with Mg(2+). (7,8-dihydropterin-6-yl)methyl diphosphate is bound by residues Thr-226, Asp-266, Asn-286, Asp-356, Lys-392, and 426-428 (RVH).

The protein in the C-terminal section; belongs to the DHPS family. This sequence in the N-terminal section; belongs to the HPPK family. It depends on Mg(2+) as a cofactor.

It catalyses the reaction 6-hydroxymethyl-7,8-dihydropterin + ATP = (7,8-dihydropterin-6-yl)methyl diphosphate + AMP + H(+). It carries out the reaction (7,8-dihydropterin-6-yl)methyl diphosphate + 4-aminobenzoate = 7,8-dihydropteroate + diphosphate. The protein operates within cofactor biosynthesis; tetrahydrofolate biosynthesis; 2-amino-4-hydroxy-6-hydroxymethyl-7,8-dihydropteridine diphosphate from 7,8-dihydroneopterin triphosphate: step 4/4. Its pathway is cofactor biosynthesis; tetrahydrofolate biosynthesis; 7,8-dihydrofolate from 2-amino-4-hydroxy-6-hydroxymethyl-7,8-dihydropteridine diphosphate and 4-aminobenzoate: step 1/2. The chain is Folate synthesis bifunctional protein (folKP) from Chlamydia caviae (strain ATCC VR-813 / DSM 19441 / 03DC25 / GPIC) (Chlamydophila caviae).